We begin with the raw amino-acid sequence, 350 residues long: Dihydroorotase (350 aa).

Zn(2+) contacts are provided by His17 and His19. Substrate contacts are provided by residues 19 to 21 (HLR) and Asn45. Residues Lys103, His140, and His178 each contribute to the Zn(2+) site. Residue Lys103 is modified to N6-carboxylysine. Residue His140 participates in substrate binding. A substrate-binding site is contributed by Leu224. Asp252 lines the Zn(2+) pocket. Asp252 is an active-site residue. Substrate-binding residues include His256 and Ala268.

Belongs to the metallo-dependent hydrolases superfamily. DHOase family. Class II DHOase subfamily. As to quaternary structure, homodimer. Zn(2+) is required as a cofactor.

It carries out the reaction (S)-dihydroorotate + H2O = N-carbamoyl-L-aspartate + H(+). The protein operates within pyrimidine metabolism; UMP biosynthesis via de novo pathway; (S)-dihydroorotate from bicarbonate: step 3/3. Functionally, catalyzes the reversible cyclization of carbamoyl aspartate to dihydroorotate. The sequence is that of Dihydroorotase from Buchnera aphidicola subsp. Acyrthosiphon pisum (strain APS) (Acyrthosiphon pisum symbiotic bacterium).